The primary structure comprises 243 residues: Probable 2-phosphosulfolactate phosphatase (243 aa).

Belongs to the ComB family. Mg(2+) serves as cofactor.

It catalyses the reaction (2R)-O-phospho-3-sulfolactate + H2O = (2R)-3-sulfolactate + phosphate. The chain is Probable 2-phosphosulfolactate phosphatase from Prochlorococcus marinus (strain MIT 9303).